Consider the following 365-residue polypeptide: NADH-quinone oxidoreductase subunit 8 (365 aa).

9 helical membrane passes run 11–31, 80–100, 120–140, 157–177, 192–212, 252–272, 273–293, 310–330, and 336–356; these read WMVALKALLVVVGLLTAFAFM, FLFVLAPLISVVFALLAFGLI, LGILYLFAVSELAVYGIFLSG, ASLISYELGLGLALLAPVLLV, HGWLFLYAFPAFLVYLIASMA, FITASALIPTLFLGGWTMPVL, EVPYLWMFLKIAFFLFFFIWI, WGFLFPLALLWFLVTALVVAL, and YLLYLSALSFLVLLGAVLYTP.

Belongs to the complex I subunit 1 family. In terms of assembly, NDH-1 is composed of 15 different subunits, Nqo1 to Nqo15. The complex has a L-shaped structure, with the hydrophobic arm (subunits Nqo7, Nqo8 and Nqo10 to Nqo14) embedded in the membrane and the hydrophilic peripheral arm (subunits Nqo1 to Nqo6, Nqo9 and Nqo15) protruding into the bacterial cytoplasm. The hydrophilic domain contains all the redox centers.

Its subcellular location is the cell inner membrane. The enzyme catalyses a quinone + NADH + 5 H(+)(in) = a quinol + NAD(+) + 4 H(+)(out). Its function is as follows. NDH-1 shuttles electrons from NADH, via FMN and iron-sulfur (Fe-S) centers, to quinones in the respiratory chain. The immediate electron acceptor for the enzyme in this species is menaquinone. Couples the redox reaction to proton translocation (for every two electrons transferred, four hydrogen ions are translocated across the cytoplasmic membrane), and thus conserves the redox energy in a proton gradient required for the synthesis of ATP. This Thermus thermophilus (strain ATCC 27634 / DSM 579 / HB8) protein is NADH-quinone oxidoreductase subunit 8 (nqo8).